Reading from the N-terminus, the 345-residue chain is Uroporphyrinogen decarboxylase (345 aa).

Substrate is bound by residues 28-32, Asp77, Tyr152, Ser207, and His321; that span reads RQAGR.

This sequence belongs to the uroporphyrinogen decarboxylase family. As to quaternary structure, homodimer.

The protein localises to the cytoplasm. The enzyme catalyses uroporphyrinogen III + 4 H(+) = coproporphyrinogen III + 4 CO2. It participates in porphyrin-containing compound metabolism; protoporphyrin-IX biosynthesis; coproporphyrinogen-III from 5-aminolevulinate: step 4/4. Functionally, catalyzes the decarboxylation of four acetate groups of uroporphyrinogen-III to yield coproporphyrinogen-III. In Arthrobacter sp. (strain FB24), this protein is Uroporphyrinogen decarboxylase.